We begin with the raw amino-acid sequence, 324 residues long: Beta-ketoacyl-[acyl-carrier-protein] synthase III (324 aa).

Catalysis depends on residues cysteine 112 and histidine 251. Residues 252–256 (QANLR) form an ACP-binding region. Residue asparagine 281 is part of the active site.

This sequence belongs to the thiolase-like superfamily. FabH family. As to quaternary structure, homodimer.

The protein resides in the cytoplasm. The catalysed reaction is malonyl-[ACP] + acetyl-CoA + H(+) = 3-oxobutanoyl-[ACP] + CO2 + CoA. It functions in the pathway lipid metabolism; fatty acid biosynthesis. Functionally, catalyzes the condensation reaction of fatty acid synthesis by the addition to an acyl acceptor of two carbons from malonyl-ACP. Catalyzes the first condensation reaction which initiates fatty acid synthesis and may therefore play a role in governing the total rate of fatty acid production. Possesses both acetoacetyl-ACP synthase and acetyl transacylase activities. Its substrate specificity determines the biosynthesis of branched-chain and/or straight-chain of fatty acids. The protein is Beta-ketoacyl-[acyl-carrier-protein] synthase III of Clostridium perfringens (strain ATCC 13124 / DSM 756 / JCM 1290 / NCIMB 6125 / NCTC 8237 / Type A).